The chain runs to 213 residues: Nucleoside triphosphate pyrophosphatase (213 aa).

Asp79 acts as the Proton acceptor in catalysis.

Belongs to the Maf family. A divalent metal cation is required as a cofactor.

It is found in the cytoplasm. It carries out the reaction a ribonucleoside 5'-triphosphate + H2O = a ribonucleoside 5'-phosphate + diphosphate + H(+). The enzyme catalyses a 2'-deoxyribonucleoside 5'-triphosphate + H2O = a 2'-deoxyribonucleoside 5'-phosphate + diphosphate + H(+). Functionally, nucleoside triphosphate pyrophosphatase. May have a dual role in cell division arrest and in preventing the incorporation of modified nucleotides into cellular nucleic acids. The chain is Nucleoside triphosphate pyrophosphatase from Rhodococcus erythropolis (strain PR4 / NBRC 100887).